The following is a 313-amino-acid chain: Ribosomal RNA small subunit methyltransferase H (313 aa).

S-adenosyl-L-methionine-binding positions include 35-37 (GGH), Asp55, Phe79, Asp101, and Gln108.

Belongs to the methyltransferase superfamily. RsmH family.

It is found in the cytoplasm. It catalyses the reaction cytidine(1402) in 16S rRNA + S-adenosyl-L-methionine = N(4)-methylcytidine(1402) in 16S rRNA + S-adenosyl-L-homocysteine + H(+). Its function is as follows. Specifically methylates the N4 position of cytidine in position 1402 (C1402) of 16S rRNA. The chain is Ribosomal RNA small subunit methyltransferase H from Shigella dysenteriae serotype 1 (strain Sd197).